We begin with the raw amino-acid sequence, 702 residues long: Polyribonucleotide nucleotidyltransferase (702 aa).

The Mg(2+) site is built by Asp493 and Asp499. The KH domain maps to 560 to 619; it reads PRLLTMRIDPERIRDVIGKGGATIRGLTEETGTNIDISDEGVVTIASADKAAAEEAKKRI. The S1 motif domain maps to 629-697; sequence GKVYDGKVAK…RQGRIRLSMK (69 aa).

Belongs to the polyribonucleotide nucleotidyltransferase family. In terms of assembly, component of the RNA degradosome, which is a multiprotein complex involved in RNA processing and mRNA degradation. Mg(2+) is required as a cofactor.

The protein resides in the cytoplasm. It carries out the reaction RNA(n+1) + phosphate = RNA(n) + a ribonucleoside 5'-diphosphate. Involved in mRNA degradation. Catalyzes the phosphorolysis of single-stranded polyribonucleotides processively in the 3'- to 5'-direction. The polypeptide is Polyribonucleotide nucleotidyltransferase (Halorhodospira halophila (strain DSM 244 / SL1) (Ectothiorhodospira halophila (strain DSM 244 / SL1))).